The sequence spans 364 residues: Dual-specificity RNA methyltransferase RlmN (364 aa).

Glutamate 91 functions as the Proton acceptor in the catalytic mechanism. In terms of domain architecture, Radical SAM core spans 97–333 (EDDRGTLCIS…TTTRKTRGDD (237 aa)). Cysteines 104 and 338 form a disulfide. 3 residues coordinate [4Fe-4S] cluster: cysteine 111, cysteine 115, and cysteine 118. Residues 164-165 (GE), serine 196, 218-220 (SLH), and asparagine 295 contribute to the S-adenosyl-L-methionine site. The S-methylcysteine intermediate role is filled by cysteine 338.

It belongs to the radical SAM superfamily. RlmN family. Requires [4Fe-4S] cluster as cofactor.

Its subcellular location is the cytoplasm. It carries out the reaction adenosine(2503) in 23S rRNA + 2 reduced [2Fe-2S]-[ferredoxin] + 2 S-adenosyl-L-methionine = 2-methyladenosine(2503) in 23S rRNA + 5'-deoxyadenosine + L-methionine + 2 oxidized [2Fe-2S]-[ferredoxin] + S-adenosyl-L-homocysteine. It catalyses the reaction adenosine(37) in tRNA + 2 reduced [2Fe-2S]-[ferredoxin] + 2 S-adenosyl-L-methionine = 2-methyladenosine(37) in tRNA + 5'-deoxyadenosine + L-methionine + 2 oxidized [2Fe-2S]-[ferredoxin] + S-adenosyl-L-homocysteine. Specifically methylates position 2 of adenine 2503 in 23S rRNA and position 2 of adenine 37 in tRNAs. m2A2503 modification seems to play a crucial role in the proofreading step occurring at the peptidyl transferase center and thus would serve to optimize ribosomal fidelity. The sequence is that of Dual-specificity RNA methyltransferase RlmN from Dechloromonas aromatica (strain RCB).